Reading from the N-terminus, the 433-residue chain is Urokinase-type plasminogen activator (433 aa).

The N-terminal stretch at 1–20 is a signal peptide; sequence MRVLLACLLVCALVVSDSDG. Residues 29 to 65 form the EGF-like domain; the sequence is GESNCGCLNGGKCVTYKYFSNIQRCSCPKKFQGEHCE. Cystine bridges form between C33-C41, C35-C53, C55-C64, C72-C153, C93-C135, and C124-C148. Positions 36–59 are binds urokinase plasminogen activator surface receptor; it reads LNGGKCVTYKYFSNIQRCSCPKKF. Positions 72 to 153 constitute a Kringle domain; the sequence is CYQGNGHSYR…FVQFCMVQDC (82 aa). Residues 154–180 are connecting peptide; it reads SVGKSPSSPREKEEFQCGQKALRPRFK. S160 carries the post-translational modification Phosphoserine. 6 cysteine pairs are disulfide-bonded: C170–C301, C211–C227, C219–C290, C315–C384, C347–C363, and C374–C402. The Peptidase S1 domain occupies 181–426; it reads IVGGQVTNAE…FLPWINTHTR (246 aa). Catalysis depends on charge relay system residues H226 and D277. Residue S378 is the Charge relay system of the active site.

Belongs to the peptidase S1 family. In terms of assembly, found in high and low molecular mass forms. Each consists of two chains, A and B. The high molecular mass form contains a long chain A which is cleaved to yield a short chain A. Forms heterodimer with SERPINA5. Binds LRP1B; binding is followed by internalization and degradation. Interacts with MRC2. Interacts with PLAUR. In complex with SERPINE1, interacts with PLAUR/uPAR. Interacts with SORL1 and LRP1, either alone or in complex with SERPINE1; these interactions are abolished in the presence of LRPAP1/RAP. The ternary complex composed of PLAUR-PLAU-PAI1 also interacts with SORLA. In terms of processing, produced as an inactive single-chain protein (pro-uPA or sc-uPA), is processed into the active disulfide-linked two-chain form of PLAU/uPA by a proteolytic event mediated, at least, by TMPRSS4.

The protein resides in the secreted. It catalyses the reaction Specific cleavage of Arg-|-Val bond in plasminogen to form plasmin.. With respect to regulation, inhibited by SERPINA5. Inhibited by SERPINE1. Functionally, specifically cleaves the zymogen plasminogen to form the active enzyme plasmin. The polypeptide is Urokinase-type plasminogen activator (PLAU) (Bos taurus (Bovine)).